A 310-amino-acid polypeptide reads, in one-letter code: tRNA dimethylallyltransferase (310 aa).

14-21 contributes to the ATP binding site; the sequence is GPTASGKT. Position 16–21 (16–21) interacts with substrate; sequence TASGKT. The segment at 39-42 is interaction with substrate tRNA; that stretch reads DSMQ.

This sequence belongs to the IPP transferase family. In terms of assembly, monomer. The cofactor is Mg(2+).

The catalysed reaction is adenosine(37) in tRNA + dimethylallyl diphosphate = N(6)-dimethylallyladenosine(37) in tRNA + diphosphate. Catalyzes the transfer of a dimethylallyl group onto the adenine at position 37 in tRNAs that read codons beginning with uridine, leading to the formation of N6-(dimethylallyl)adenosine (i(6)A). In Corynebacterium jeikeium (strain K411), this protein is tRNA dimethylallyltransferase.